The chain runs to 193 residues: Ion-translocating oxidoreductase complex subunit A (193 aa).

Helical transmembrane passes span Leu-5 to Leu-25, Met-39 to Ile-59, Ile-63 to Val-83, Leu-102 to Leu-122, Ala-134 to Ile-154, and Ala-171 to Val-191.

The protein belongs to the NqrDE/RnfAE family. In terms of assembly, the complex is composed of six subunits: RsxA, RsxB, RsxC, RsxD, RsxE and RsxG.

It is found in the cell inner membrane. Part of a membrane-bound complex that couples electron transfer with translocation of ions across the membrane. Required to maintain the reduced state of SoxR. The chain is Ion-translocating oxidoreductase complex subunit A from Shigella boydii serotype 18 (strain CDC 3083-94 / BS512).